The primary structure comprises 59 residues: Protein translocase subunit SecE (59 aa).

Residues 39–59 traverse the membrane as a helical segment; the sequence is VMALFLGLIDALFVALLSFFF.

It belongs to the SecE/SEC61-gamma family. As to quaternary structure, component of the Sec protein translocase complex. Heterotrimer consisting of SecY, SecE and SecG subunits. The heterotrimers can form oligomers, although 1 heterotrimer is thought to be able to translocate proteins. Interacts with the ribosome. Interacts with SecDF, and other proteins may be involved. Interacts with SecA.

The protein localises to the cell inner membrane. In terms of biological role, essential subunit of the Sec protein translocation channel SecYEG. Clamps together the 2 halves of SecY. May contact the channel plug during translocation. This Treponema pallidum (strain Nichols) protein is Protein translocase subunit SecE.